The primary structure comprises 783 residues: Protein phosphatase 2C 29 (783 aa).

The tract at residues 151 to 194 (SFSALPLQPGPDRSGLFMSGPIERGATSGPLDPPAGEISRSNSA) is disordered. Ser-199 carries the post-translational modification Phosphoserine. Positions 260–770 (SSGENDLQWA…DDCTVLVIAL (511 aa)) constitute a PPM-type phosphatase domain. The Mn(2+) site is built by Asp-295 and Gly-296. The tract at residues 555 to 595 (ETGESVETAERVEERRNDLDRDDGNKEPLVVDSSDSTVNNE) is disordered. The segment covering 562–580 (TAERVEERRNDLDRDDGNK) has biased composition (basic and acidic residues). Mn(2+) is bound by residues Asp-701 and Asp-761.

It belongs to the PP2C family. Mg(2+) is required as a cofactor. The cofactor is Mn(2+). In terms of tissue distribution, expressed in roots, leaves, stems, inflorescences, flowers and developing vascular tissue.

It is found in the nucleus. It catalyses the reaction O-phospho-L-seryl-[protein] + H2O = L-seryl-[protein] + phosphate. The catalysed reaction is O-phospho-L-threonyl-[protein] + H2O = L-threonyl-[protein] + phosphate. In terms of biological role, involved in the regulation of pedicel length and of CLAVATA pathways controlling stem cell identity at shoot and flower meristems. The polypeptide is Protein phosphatase 2C 29 (PLL1) (Arabidopsis thaliana (Mouse-ear cress)).